We begin with the raw amino-acid sequence, 757 residues long: Polyribonucleotide nucleotidyltransferase (757 aa).

Mg(2+) is bound by residues aspartate 487 and aspartate 493. The KH domain occupies proline 554–isoleucine 613. An S1 motif domain is found at glycine 623–arginine 691. A disordered region spans residues proline 697–serine 757. Composition is skewed to basic and acidic residues over residues glycine 702–glutamine 711 and proline 719–serine 757.

The protein belongs to the polyribonucleotide nucleotidyltransferase family. Requires Mg(2+) as cofactor.

It is found in the cytoplasm. The enzyme catalyses RNA(n+1) + phosphate = RNA(n) + a ribonucleoside 5'-diphosphate. Involved in mRNA degradation. Catalyzes the phosphorolysis of single-stranded polyribonucleotides processively in the 3'- to 5'-direction. The sequence is that of Polyribonucleotide nucleotidyltransferase from Sorangium cellulosum (strain So ce56) (Polyangium cellulosum (strain So ce56)).